Consider the following 219-residue polypeptide: Zinc finger C2HC domain-containing protein 1B (219 aa).

C2HC/C3H-type zinc fingers lie at residues 14 to 43 (ELFP…LFNK) and 117 to 146 (DYIQ…QESR). Zn(2+) is bound by residues Cys-18, Cys-21, His-33, Cys-37, Cys-121, Cys-124, His-136, and Cys-140. The segment at 190 to 219 (EASAAPTRPAVDPASGAKLRQGFAKSSKKD) is disordered.

The protein belongs to the ZC2HC1 family. The cofactor is Zn(2+).

This Bos taurus (Bovine) protein is Zinc finger C2HC domain-containing protein 1B (ZC2HC1B).